A 148-amino-acid chain; its full sequence is 3-hydroxyacyl-[acyl-carrier-protein] dehydratase FabZ (148 aa).

Histidine 55 is a catalytic residue.

Belongs to the thioester dehydratase family. FabZ subfamily.

The protein localises to the cytoplasm. The catalysed reaction is a (3R)-hydroxyacyl-[ACP] = a (2E)-enoyl-[ACP] + H2O. Involved in unsaturated fatty acids biosynthesis. Catalyzes the dehydration of short chain beta-hydroxyacyl-ACPs and long chain saturated and unsaturated beta-hydroxyacyl-ACPs. The polypeptide is 3-hydroxyacyl-[acyl-carrier-protein] dehydratase FabZ (Haemophilus influenzae (strain ATCC 51907 / DSM 11121 / KW20 / Rd)).